The sequence spans 226 residues: Sugar fermentation stimulation protein homolog (226 aa).

This sequence belongs to the SfsA family.

This Ruminiclostridium cellulolyticum (strain ATCC 35319 / DSM 5812 / JCM 6584 / H10) (Clostridium cellulolyticum) protein is Sugar fermentation stimulation protein homolog.